We begin with the raw amino-acid sequence, 520 residues long: NADH-quinone oxidoreductase subunit N (520 aa).

14 helical membrane passes run 13-33 (ALLP…ASVW), 55-75 (FGVI…GDGA), 87-107 (GFRW…LMLL), 115-135 (AAFG…MMVL), 141-161 (LMFV…LAGV), 176-196 (FLLG…LFGA), 219-239 (FMSG…AAPF), 250-270 (APLP…FAVF), 285-305 (WHMG…VFAL), 313-333 (MLAY…IVGD), 339-359 (ALIF…GVLI), 383-403 (WLAI…VLGG), 425-445 (ILAV…LAVV), and 468-488 (SLIA…TPIM). A compositionally biased stretch (low complexity) spans 494–508 (ATTTTSPTSNPAAPR). The interval 494 to 520 (ATTTTSPTSNPAAPRGEVRLQTASVPR) is disordered.

This sequence belongs to the complex I subunit 2 family. In terms of assembly, NDH-1 is composed of 14 different subunits. Subunits NuoA, H, J, K, L, M, N constitute the membrane sector of the complex.

Its subcellular location is the cell inner membrane. The enzyme catalyses a quinone + NADH + 5 H(+)(in) = a quinol + NAD(+) + 4 H(+)(out). In terms of biological role, NDH-1 shuttles electrons from NADH, via FMN and iron-sulfur (Fe-S) centers, to quinones in the respiratory chain. The immediate electron acceptor for the enzyme in this species is believed to be ubiquinone. Couples the redox reaction to proton translocation (for every two electrons transferred, four hydrogen ions are translocated across the cytoplasmic membrane), and thus conserves the redox energy in a proton gradient. The sequence is that of NADH-quinone oxidoreductase subunit N from Gemmatimonas aurantiaca (strain DSM 14586 / JCM 11422 / NBRC 100505 / T-27).